We begin with the raw amino-acid sequence, 923 residues long: Alanine--tRNA ligase (923 aa).

Zn(2+) is bound by residues histidine 611, histidine 615, cysteine 714, and histidine 718. Residues 886-903 (VGGGGGGRPNMARGGGTD) are compositionally biased toward gly residues. Residues 886–909 (VGGGGGGRPNMARGGGTDPSGMDN) form a disordered region.

It belongs to the class-II aminoacyl-tRNA synthetase family. Requires Zn(2+) as cofactor.

It localises to the cytoplasm. It catalyses the reaction tRNA(Ala) + L-alanine + ATP = L-alanyl-tRNA(Ala) + AMP + diphosphate. Its function is as follows. Catalyzes the attachment of alanine to tRNA(Ala) in a two-step reaction: alanine is first activated by ATP to form Ala-AMP and then transferred to the acceptor end of tRNA(Ala). Also edits incorrectly charged Ser-tRNA(Ala) and Gly-tRNA(Ala) via its editing domain. The sequence is that of Alanine--tRNA ligase from Methanococcoides burtonii (strain DSM 6242 / NBRC 107633 / OCM 468 / ACE-M).